Consider the following 248-residue polypeptide: tRNA (guanine-N(7)-)-methyltransferase (248 aa).

Residues Gly-70, 93–94, 129–130, and Leu-149 each bind S-adenosyl-L-methionine; these read EI and NA. Residue Asp-152 is part of the active site. 227–229 is a binding site for S-adenosyl-L-methionine; it reads SEE.

The protein belongs to the class I-like SAM-binding methyltransferase superfamily. TrmB family.

Its subcellular location is the nucleus. The enzyme catalyses guanosine(46) in tRNA + S-adenosyl-L-methionine = N(7)-methylguanosine(46) in tRNA + S-adenosyl-L-homocysteine. Its pathway is tRNA modification; N(7)-methylguanine-tRNA biosynthesis. In terms of biological role, catalyzes the formation of N(7)-methylguanine at position 46 (m7G46) in tRNA. The protein is tRNA (guanine-N(7)-)-methyltransferase of Drosophila mojavensis (Fruit fly).